The chain runs to 358 residues: Nicotinate-nucleotide--dimethylbenzimidazole phosphoribosyltransferase (358 aa).

Glutamate 314 serves as the catalytic Proton acceptor.

The protein belongs to the CobT family.

It catalyses the reaction 5,6-dimethylbenzimidazole + nicotinate beta-D-ribonucleotide = alpha-ribazole 5'-phosphate + nicotinate + H(+). It functions in the pathway nucleoside biosynthesis; alpha-ribazole biosynthesis; alpha-ribazole from 5,6-dimethylbenzimidazole: step 1/2. Catalyzes the synthesis of alpha-ribazole-5'-phosphate from nicotinate mononucleotide (NAMN) and 5,6-dimethylbenzimidazole (DMB). In Mycobacterium ulcerans (strain Agy99), this protein is Nicotinate-nucleotide--dimethylbenzimidazole phosphoribosyltransferase.